Reading from the N-terminus, the 427-residue chain is Enolase (427 aa).

Q163 serves as a coordination point for (2R)-2-phosphoglycerate. The Proton donor role is filled by E205. Positions 242, 285, and 312 each coordinate Mg(2+). The (2R)-2-phosphoglycerate site is built by K337, R366, S367, and K388. K337 serves as the catalytic Proton acceptor.

This sequence belongs to the enolase family. Requires Mg(2+) as cofactor.

The protein resides in the cytoplasm. It is found in the secreted. Its subcellular location is the cell surface. It catalyses the reaction (2R)-2-phosphoglycerate = phosphoenolpyruvate + H2O. Its pathway is carbohydrate degradation; glycolysis; pyruvate from D-glyceraldehyde 3-phosphate: step 4/5. In terms of biological role, catalyzes the reversible conversion of 2-phosphoglycerate (2-PG) into phosphoenolpyruvate (PEP). It is essential for the degradation of carbohydrates via glycolysis. This Xanthobacter autotrophicus (strain ATCC BAA-1158 / Py2) protein is Enolase.